Here is a 153-residue protein sequence, read N- to C-terminus: GVQKTETQAISPVPAEKLFKGSFLDMDTVVPKAFPEGIKSVQVLEGNGGVGTIKNVTLGDATPFNTMKTRIDAIDEHAFTYTYTIIGGDILLDIIESIENHFKIVPTDGGSTITQTTIYNTIGDAVIPEENIKDATDKSIQLFKAVEAYLLAN.

It belongs to the BetVI family.

Its subcellular location is the cytoplasm. Catalyzes the two-stage endonucleolytic cleavage to 3'-phosphomononucleotides and 3'-phosphooligonucleotides with 2',3'-cyclic phosphate intermediates. This is Ribonuclease 2 from Panax ginseng (Korean ginseng).